We begin with the raw amino-acid sequence, 214 residues long: Outer-membrane lipoprotein LolB (214 aa).

Positions 1-30 are cleaved as a signal peptide; the sequence is MKHVSSPHPCAAIASARVWLGLVLVALLAG. A lipid anchor (N-palmitoyl cysteine) is attached at cysteine 31. Cysteine 31 carries S-diacylglycerol cysteine lipidation.

This sequence belongs to the LolB family. As to quaternary structure, monomer.

It localises to the cell outer membrane. In terms of biological role, plays a critical role in the incorporation of lipoproteins in the outer membrane after they are released by the LolA protein. The polypeptide is Outer-membrane lipoprotein LolB (Chromohalobacter salexigens (strain ATCC BAA-138 / DSM 3043 / CIP 106854 / NCIMB 13768 / 1H11)).